The primary structure comprises 48 residues: FQPIKESIVSRLFNAVAAEDLIVKGGREIVPGMIVTGMEVAEIDGAPR.

Positions 18 and 40 each coordinate substrate.

It belongs to the THI4 family. In terms of assembly, homooctamer. Fe cation is required as a cofactor.

The protein resides in the plastid. It is found in the chloroplast. It carries out the reaction [ADP-thiazole synthase]-L-cysteine + glycine + NAD(+) = [ADP-thiazole synthase]-dehydroalanine + ADP-5-ethyl-4-methylthiazole-2-carboxylate + nicotinamide + 3 H2O + 2 H(+). Functionally, involved in biosynthesis of the thiamine precursor thiazole. Catalyzes the conversion of NAD and glycine to adenosine diphosphate 5-(2-hydroxyethyl)-4-methylthiazole-2-carboxylic acid (ADT), an adenylated thiazole intermediate. The reaction includes an iron-dependent sulfide transfer from a conserved cysteine residue of the protein to a thiazole intermediate. The enzyme can only undergo a single turnover, which suggests it is a suicide enzyme. May have additional roles in adaptation to various stress conditions and in DNA damage tolerance. The protein is Thiamine thiazole synthase, chloroplastic (THI1) of Populus euphratica (Euphrates poplar).